Consider the following 309-residue polypeptide: Porphobilinogen deaminase (309 aa).

Cysteine 241 carries the S-(dipyrrolylmethanemethyl)cysteine modification.

The protein belongs to the HMBS family. Monomer. Requires dipyrromethane as cofactor.

It carries out the reaction 4 porphobilinogen + H2O = hydroxymethylbilane + 4 NH4(+). It functions in the pathway porphyrin-containing compound metabolism; protoporphyrin-IX biosynthesis; coproporphyrinogen-III from 5-aminolevulinate: step 2/4. Its function is as follows. Tetrapolymerization of the monopyrrole PBG into the hydroxymethylbilane pre-uroporphyrinogen in several discrete steps. This Bacillus cereus (strain ZK / E33L) protein is Porphobilinogen deaminase.